Here is a 119-residue protein sequence, read N- to C-terminus: Large ribosomal subunit protein bL20 (119 aa).

Belongs to the bacterial ribosomal protein bL20 family.

In terms of biological role, binds directly to 23S ribosomal RNA and is necessary for the in vitro assembly process of the 50S ribosomal subunit. It is not involved in the protein synthesizing functions of that subunit. The sequence is that of Large ribosomal subunit protein bL20 from Cellvibrio japonicus (strain Ueda107) (Pseudomonas fluorescens subsp. cellulosa).